Consider the following 398-residue polypeptide: 2-amino-3-ketobutyrate coenzyme A ligase (398 aa).

111–112 (CF) provides a ligand contact to pyridoxal 5'-phosphate. His-136 contacts substrate. Pyridoxal 5'-phosphate is bound by residues Ser-185, 210–213 (DDSH), 241–244 (TLGK), and 274–275 (SN). Position 244 is an N6-(pyridoxal phosphate)lysine (Lys-244). Arg-368 lines the substrate pocket.

The protein belongs to the class-II pyridoxal-phosphate-dependent aminotransferase family. As to quaternary structure, homodimer. Pyridoxal 5'-phosphate is required as a cofactor.

The catalysed reaction is glycine + acetyl-CoA = (2S)-2-amino-3-oxobutanoate + CoA. The protein operates within amino-acid degradation; L-threonine degradation via oxydo-reductase pathway; glycine from L-threonine: step 2/2. In terms of biological role, catalyzes the cleavage of 2-amino-3-ketobutyrate to glycine and acetyl-CoA. This chain is 2-amino-3-ketobutyrate coenzyme A ligase, found in Escherichia coli (strain K12).